Here is a 176-residue protein sequence, read N- to C-terminus: Disulfide bond formation protein B (176 aa).

Topologically, residues 1 to 14 are cytoplasmic; it reads MLRFLNQCSQGRGA. Residues 15–31 traverse the membrane as a helical segment; sequence WLLMAFTALALELTALW. Topologically, residues 32-49 are periplasmic; it reads FQHVMLLKPCVLCIYERC. Residues cysteine 41 and cysteine 44 are joined by a disulfide bond. Residues 50 to 65 form a helical membrane-spanning segment; the sequence is ALFGVLGAALIGAIAP. Topologically, residues 66 to 71 are cytoplasmic; it reads KTPLRY. A helical membrane pass occupies residues 72-89; that stretch reads VAMVIWLYSAFRGVQLTY. Topologically, residues 90–144 are periplasmic; the sequence is EHTMLQLYPSPFATCDFMVRFPEWLPLDKWVPQVFVASGDCAERQWDFLGMEMPQ. Residues cysteine 104 and cysteine 130 are joined by a disulfide bond. The chain crosses the membrane as a helical span at residues 145-163; the sequence is WLLGIFIAYLIVAVLVVIS. Residues 164–176 lie on the Cytoplasmic side of the membrane; it reads QPFKAKKRDLFGR.

It belongs to the DsbB family.

Its subcellular location is the cell inner membrane. In terms of biological role, required for disulfide bond formation in some periplasmic proteins such as PhoA or OmpA. Acts by oxidizing the DsbA protein. The sequence is that of Disulfide bond formation protein B from Shigella flexneri.